We begin with the raw amino-acid sequence, 188 residues long: ATP-dependent protease subunit HslV (188 aa).

Thr14 is an active-site residue. The Na(+) site is built by Ala173, Cys176, and Thr179.

It belongs to the peptidase T1B family. HslV subfamily. A double ring-shaped homohexamer of HslV is capped on each side by a ring-shaped HslU homohexamer. The assembly of the HslU/HslV complex is dependent on binding of ATP.

The protein localises to the cytoplasm. The catalysed reaction is ATP-dependent cleavage of peptide bonds with broad specificity.. With respect to regulation, allosterically activated by HslU binding. In terms of biological role, protease subunit of a proteasome-like degradation complex believed to be a general protein degrading machinery. This chain is ATP-dependent protease subunit HslV, found in Caulobacter vibrioides (strain ATCC 19089 / CIP 103742 / CB 15) (Caulobacter crescentus).